A 207-amino-acid polypeptide reads, in one-letter code: Large ribosomal subunit protein bL25 (207 aa).

The tract at residues Glu-171 to Glu-207 is disordered. Basic and acidic residues predominate over residues Glu-196–Glu-207.

This sequence belongs to the bacterial ribosomal protein bL25 family. CTC subfamily. As to quaternary structure, part of the 50S ribosomal subunit; part of the 5S rRNA/L5/L18/L25 subcomplex. Contacts the 5S rRNA. Binds to the 5S rRNA independently of L5 and L18.

Functionally, this is one of the proteins that binds to the 5S RNA in the ribosome where it forms part of the central protuberance. This Listeria innocua serovar 6a (strain ATCC BAA-680 / CLIP 11262) protein is Large ribosomal subunit protein bL25.